A 221-amino-acid chain; its full sequence is Histone H1-like protein HC2 (221 aa).

Composition is skewed to basic residues over residues 1–50 and 59–70; these read MLGV…KTVA and PVAKKATAKKAP. The interval 1–70 is disordered; sequence MLGVQKKRST…AKKATAKKAP (70 aa).

The protein belongs to the histone H1/H5 family. HCT subfamily.

In terms of biological role, might have a role in establishing the nucleoid structure of elementary bodies. The chain is Histone H1-like protein HC2 (hctB) from Chlamydia trachomatis serovar L2 (strain ATCC VR-902B / DSM 19102 / 434/Bu).